A 429-amino-acid chain; its full sequence is Adenylosuccinate synthetase (429 aa).

Residues 12–18 and 40–42 contribute to the GTP site; these read GDEGKGK and GHT. Asp13 serves as the catalytic Proton acceptor. Asp13 and Gly40 together coordinate Mg(2+). IMP-binding positions include 13–16, 38–41, Thr128, Arg142, Gln223, Thr238, and Arg302; these read DEGK and NAGH. His41 serves as the catalytic Proton donor. 298–304 serves as a coordination point for substrate; sequence VNTGRKR. GTP contacts are provided by residues Arg304, 330–332, and 412–414; these read KLD and GVG.

This sequence belongs to the adenylosuccinate synthetase family. In terms of assembly, homodimer. Mg(2+) is required as a cofactor.

The protein resides in the cytoplasm. The catalysed reaction is IMP + L-aspartate + GTP = N(6)-(1,2-dicarboxyethyl)-AMP + GDP + phosphate + 2 H(+). Its pathway is purine metabolism; AMP biosynthesis via de novo pathway; AMP from IMP: step 1/2. Functionally, plays an important role in the de novo pathway of purine nucleotide biosynthesis. Catalyzes the first committed step in the biosynthesis of AMP from IMP. This Corynebacterium jeikeium (strain K411) protein is Adenylosuccinate synthetase.